A 326-amino-acid polypeptide reads, in one-letter code: MVWQRQHVLGLADFTPEEYQMVLQTSASFQEVLTRRLPKVPTLQGKVVVTLFFEPSTRTRTSFELAAKRLSADVLNFSPGTSSLSKGETLLDTARTFLAMGSDLLIVRHAQAGVPQQLAAEIDRRGSPVGVLNAGDGLHEHPTQGLLDLFTLCSHLDPRRPRLELLQGIKIAIVGDILHSRVARSDIYALVAAGAEVHLAGPPTLLPKDFAQFVPGHTLPIHWQLEPALEGARFVITLRLQQERMGEFLLPSLQEYHHFFGLTRQRLRLCHPEVRVLHPGPVNRGVELSSEVMEDPGLNLIEQQVTHGVAVRMALLYLMGGGRIPA.

Arginine 58 and threonine 59 together coordinate carbamoyl phosphate. Lysine 86 contributes to the L-aspartate binding site. 3 residues coordinate carbamoyl phosphate: arginine 108, histidine 141, and glutamine 144. L-aspartate is bound by residues arginine 181 and arginine 239. The carbamoyl phosphate site is built by glycine 280 and proline 281.

The protein belongs to the aspartate/ornithine carbamoyltransferase superfamily. ATCase family. Heterododecamer (2C3:3R2) of six catalytic PyrB chains organized as two trimers (C3), and six regulatory PyrI chains organized as three dimers (R2).

It carries out the reaction carbamoyl phosphate + L-aspartate = N-carbamoyl-L-aspartate + phosphate + H(+). The protein operates within pyrimidine metabolism; UMP biosynthesis via de novo pathway; (S)-dihydroorotate from bicarbonate: step 2/3. In terms of biological role, catalyzes the condensation of carbamoyl phosphate and aspartate to form carbamoyl aspartate and inorganic phosphate, the committed step in the de novo pyrimidine nucleotide biosynthesis pathway. The polypeptide is Aspartate carbamoyltransferase catalytic subunit (Synechococcus sp. (strain JA-2-3B'a(2-13)) (Cyanobacteria bacterium Yellowstone B-Prime)).